Here is a 321-residue protein sequence, read N- to C-terminus: GDP-L-fucose synthase (321 aa).

14-20 (GGSGLVG) serves as a coordination point for NADP(+). Catalysis depends on Tyr-143, which acts as the Proton donor/acceptor. NADP(+) contacts are provided by residues Lys-147, 170-173 (PTNV), and His-186. The substrate site is built by Lys-194, Trp-208, Arg-215, and Asp-277.

The protein belongs to the NAD(P)-dependent epimerase/dehydratase family. Fucose synthase subfamily. Homodimer.

The enzyme catalyses GDP-beta-L-fucose + NADP(+) = GDP-4-dehydro-alpha-D-rhamnose + NADPH + H(+). It functions in the pathway nucleotide-sugar biosynthesis; GDP-L-fucose biosynthesis via de novo pathway; GDP-L-fucose from GDP-alpha-D-mannose: step 2/2. Its function is as follows. Catalyzes the two-step NADP-dependent conversion of GDP-4-dehydro-6-deoxy-D-mannose to GDP-fucose, involving an epimerase and a reductase reaction. The protein is GDP-L-fucose synthase of Mus musculus (Mouse).